A 251-amino-acid chain; its full sequence is Proteasome subunit alpha type-7 (251 aa).

Belongs to the peptidase T1A family. The 26S proteasome consists of a 20S proteasome core and two 19S regulatory subunits. The 20S proteasome core is composed of 28 subunits that are arranged in four stacked rings, resulting in a barrel-shaped structure. The two end rings are each formed by seven alpha subunits, and the two central rings are each formed by seven beta subunits. The catalytic chamber with the active sites is on the inside of the barrel.

It is found in the cytoplasm. The protein resides in the nucleus. Its function is as follows. The proteasome is a multicatalytic proteinase complex which is characterized by its ability to cleave peptides with Arg, Phe, Tyr, Leu, and Glu adjacent to the leaving group at neutral or slightly basic pH. The proteasome has an ATP-dependent proteolytic activity. This Carassius auratus (Goldfish) protein is Proteasome subunit alpha type-7 (psma7).